Here is a 544-residue protein sequence, read N- to C-terminus: Chaperonin GroEL (544 aa).

ATP-binding positions include 29–32 (TLGP), lysine 50, 86–90 (DGTTT), glycine 413, 479–481 (DAA), and aspartate 495.

The protein belongs to the chaperonin (HSP60) family. In terms of assembly, forms a cylinder of 14 subunits composed of two heptameric rings stacked back-to-back. Interacts with the co-chaperonin GroES.

It localises to the cytoplasm. The enzyme catalyses ATP + H2O + a folded polypeptide = ADP + phosphate + an unfolded polypeptide.. In terms of biological role, together with its co-chaperonin GroES, plays an essential role in assisting protein folding. The GroEL-GroES system forms a nano-cage that allows encapsulation of the non-native substrate proteins and provides a physical environment optimized to promote and accelerate protein folding. The protein is Chaperonin GroEL of Borrelia duttonii (strain Ly).